The primary structure comprises 281 residues: Pantothenate synthetase (281 aa).

30–37 (MGYLHEGH) serves as a coordination point for ATP. The active-site Proton donor is the His-37. (R)-pantoate is bound at residue Gln-61. Beta-alanine is bound at residue Gln-61. Position 147-150 (147-150 (GEKD)) interacts with ATP. Gln-153 serves as a coordination point for (R)-pantoate. ATP-binding positions include Val-176 and 184–187 (MSSR).

This sequence belongs to the pantothenate synthetase family. As to quaternary structure, homodimer.

The protein localises to the cytoplasm. The catalysed reaction is (R)-pantoate + beta-alanine + ATP = (R)-pantothenate + AMP + diphosphate + H(+). Its pathway is cofactor biosynthesis; (R)-pantothenate biosynthesis; (R)-pantothenate from (R)-pantoate and beta-alanine: step 1/1. Functionally, catalyzes the condensation of pantoate with beta-alanine in an ATP-dependent reaction via a pantoyl-adenylate intermediate. The protein is Pantothenate synthetase of Desulfatibacillum aliphaticivorans.